The chain runs to 95 residues: Small ribosomal subunit protein uS19 (95 aa).

The protein belongs to the universal ribosomal protein uS19 family.

Protein S19 forms a complex with S13 that binds strongly to the 16S ribosomal RNA. This is Small ribosomal subunit protein uS19 from Thermotoga sp. (strain RQ2).